A 443-amino-acid polypeptide reads, in one-letter code: 23S rRNA (uracil(1939)-C(5))-methyltransferase RlmD (443 aa).

A TRAM domain is found at 12–70; the sequence is AKKLSQKIALKVQRLDHLGAGIAEHQGKVVFIPGALPGETVEVQLTEQKKNYARAKLQR. Cys83, Cys89, Cys92, and Cys171 together coordinate [4Fe-4S] cluster. S-adenosyl-L-methionine contacts are provided by Gln276, Phe305, Asn310, Glu326, Asp353, and Asp373. The Nucleophile role is filled by Cys399.

The protein belongs to the class I-like SAM-binding methyltransferase superfamily. RNA M5U methyltransferase family. RlmD subfamily.

The enzyme catalyses uridine(1939) in 23S rRNA + S-adenosyl-L-methionine = 5-methyluridine(1939) in 23S rRNA + S-adenosyl-L-homocysteine + H(+). Its function is as follows. Catalyzes the formation of 5-methyl-uridine at position 1939 (m5U1939) in 23S rRNA. The polypeptide is 23S rRNA (uracil(1939)-C(5))-methyltransferase RlmD (Shewanella amazonensis (strain ATCC BAA-1098 / SB2B)).